We begin with the raw amino-acid sequence, 906 residues long: Protein translocase subunit SecA (906 aa).

Residues Gln-87, 105–109 (GEGKT), and Asp-513 each bind ATP. Residues 860-906 (QVNKGEVVSDENTGDDTFVRNEKKVGRNEPCPCGSGKKYKQCHGKLD) form a disordered region. Basic and acidic residues predominate over residues 876 to 886 (TFVRNEKKVGR). Zn(2+) is bound by residues Cys-890, Cys-892, Cys-901, and His-902. Over residues 896-906 (KKYKQCHGKLD) the composition is skewed to basic residues.

Belongs to the SecA family. As to quaternary structure, monomer and homodimer. Part of the essential Sec protein translocation apparatus which comprises SecA, SecYEG and auxiliary proteins SecDF-YajC and YidC. It depends on Zn(2+) as a cofactor.

It is found in the cell inner membrane. The protein resides in the cytoplasm. The enzyme catalyses ATP + H2O + cellular proteinSide 1 = ADP + phosphate + cellular proteinSide 2.. Its function is as follows. Part of the Sec protein translocase complex. Interacts with the SecYEG preprotein conducting channel. Has a central role in coupling the hydrolysis of ATP to the transfer of proteins into and across the cell membrane, serving both as a receptor for the preprotein-SecB complex and as an ATP-driven molecular motor driving the stepwise translocation of polypeptide chains across the membrane. This chain is Protein translocase subunit SecA, found in Psychromonas ingrahamii (strain DSM 17664 / CCUG 51855 / 37).